The following is a 304-amino-acid chain: Rhodopsin (304 aa).

Over 1 to 13 (YEYPQYYLVNPAA) the chain is Extracellular. The helical transmembrane segment at 14–38 (YAALGAYMFLLILVGFPINFLTLYV) threads the bilayer. Topologically, residues 39–50 (TIEHKKLRTPLN) are cytoplasmic. Residues 51–73 (YILLNLAVANLFMVFGGFTTTMF) form a helical membrane-spanning segment. Over 74 to 87 (TSIRGYFVLGHLGC) the chain is Extracellular. A disulfide bridge links C87 with C164. Residues 88-110 (NLEGFFATLSGEIALWSLVVLAI) traverse the membrane as a helical segment. The 'Ionic lock' involved in activated form stabilization signature appears at 111-113 (ERW). Residues 111–129 (ERWVVVCKPISNFRFGENH) lie on the Cytoplasmic side of the membrane. The helical transmembrane segment at 130–150 (AIMGLAFTWTMAMACAAPPLV) threads the bilayer. Residues 151-179 (GWSRYIPEGMQCSCGIDYYTRAEGFNNES) are Extracellular-facing. N177 is a glycosylation site (N-linked (GlcNAc...) asparagine). A helical transmembrane segment spans residues 180–201 (FVVYMFTCHFMTPLTIVFFCYG). The Cytoplasmic segment spans residues 202–229 (RLLCAVKEAAAAQQESETTQRAEREVTR). A helical membrane pass occupies residues 230–251 (MVVIMVIAFLICWCPYAGVAWF). At 252–263 (IFTHQGSEFGPV) the chain is on the extracellular side. A helical transmembrane segment spans residues 264-285 (FMTIPAFFAKSSSIYNPMIYIC). An N6-(retinylidene)lysine modification is found at K273. Topologically, residues 286–304 (LNKQFRHCMITTLCCGKKA) are cytoplasmic. S-palmitoyl cysteine attachment occurs at residues C299 and C300.

It belongs to the G-protein coupled receptor 1 family. Opsin subfamily. Phosphorylated on some or all of the serine and threonine residues present in the C-terminal region. In terms of processing, contains one covalently linked retinal chromophore.

It localises to the membrane. Its subcellular location is the cell projection. It is found in the cilium. The protein localises to the photoreceptor outer segment. Functionally, photoreceptor required for image-forming vision at low light intensity. While most salt water fish species use retinal as chromophore, most freshwater fish use 3-dehydroretinal, or a mixture of retinal and 3-dehydroretinal. Light-induced isomerization of 11-cis to all-trans retinal triggers a conformational change that activates signaling via G-proteins. Subsequent receptor phosphorylation mediates displacement of the bound G-protein alpha subunit by arrestin and terminates signaling. The polypeptide is Rhodopsin (rho) (Ictalurus punctatus (Channel catfish)).